Reading from the N-terminus, the 160-residue chain is MGVTKKPDLNDPVLRAKLAKGMGHNYYGEPAWPNDLLYIFPVVILGTIACNVGLAVLEPSMVGEPADPFATPLEILPEWYFFPVFQILRTVPNKLLGVLLMVSVPAGLLTVPFLENVNKFQNPFRRPVATTVFLIGTAVALWLGIGATLPIDKSLTLGLF.

A run of 3 helical transmembrane segments spans residues 36–56, 95–115, and 131–151; these read LLYIFPVVILGTIACNVGLAV, LLGVLLMVSVPAGLLTVPFLE, and TVFLIGTAVALWLGIGATLPI.

This sequence belongs to the cytochrome b family. PetD subfamily. The 4 large subunits of the cytochrome b6-f complex are cytochrome b6, subunit IV (17 kDa polypeptide, petD), cytochrome f and the Rieske protein, while the 4 small subunits are petG, petL, petM and petN. The complex functions as a dimer.

It localises to the plastid. The protein localises to the chloroplast thylakoid membrane. Its function is as follows. Component of the cytochrome b6-f complex, which mediates electron transfer between photosystem II (PSII) and photosystem I (PSI), cyclic electron flow around PSI, and state transitions. This Coffea arabica (Arabian coffee) protein is Cytochrome b6-f complex subunit 4.